A 413-amino-acid chain; its full sequence is Ferredoxin--NADP reductase (413 aa).

Position 1 is an N-acetylmethionine (methionine 1). Residues 18–76 (NRLFVYEVIGLSQSTMTDGLDYPIRRSGSTFITVPLKRMNQEMRRITRMGGKIVSIKPL) enclose the CpcD-like domain. Positions 74–120 (KPLEGDSPLPHTEGIAKPSQSEGSGSEAVANPAPESNKTMTTTPKEK) are disordered. A compositionally biased stretch (polar residues) spans 107 to 116 (PESNKTMTTT). An FAD-binding FR-type domain is found at 133-256 (KTPYIGKVLE…TGPVGKEMLL (124 aa)). FAD is bound by residues 192-195 (RLYS), 213-215 (CVR), tyrosine 219, 230-232 (VCS), and threonine 271. NADP(+)-binding residues include serine 195 and arginine 215. NADP(+) contacts are provided by residues threonine 271, 303-304 (IP), 333-334 (SR), 343-347 (RMYIQ), 372-373 (GL), and glutamate 411.

It belongs to the ferredoxin--NADP reductase type 1 family. As to quaternary structure, purifies with both the classic phycobilisome (PBS) supercomplex (CpcG-PBS) and a photosystem I-associated PBS called CpcL-PBS; it accumulates to a higher level in CpcL-PBS. In both PBS it can be cross-linked to both phycocyanin subunits. The cofactor is FAD. In terms of processing, acetylated at the N-terminus; 6% of protein in CpcG-PBS and 12% of protein in CpcL-PBS is acetylated.

Its subcellular location is the cellular thylakoid membrane. It carries out the reaction 2 reduced [2Fe-2S]-[ferredoxin] + NADP(+) + H(+) = 2 oxidized [2Fe-2S]-[ferredoxin] + NADPH. The sequence is that of Ferredoxin--NADP reductase from Synechocystis sp. (strain ATCC 27184 / PCC 6803 / Kazusa).